A 1374-amino-acid polypeptide reads, in one-letter code: Tripeptidyl-peptidase 2 (1374 aa).

One can recognise a Peptidase S8 domain in the interval 62 to 558 (ALLLNKTDTE…QGMIKIATAY (497 aa)). Catalysis depends on charge relay system residues aspartate 93, histidine 314, and serine 499.

The protein belongs to the peptidase S8 family. In terms of tissue distribution, expressed in intestinal fat-storing cells and some head neurons.

It carries out the reaction Release of an N-terminal tripeptide from a polypeptide.. Functionally, component of the proteolytic cascade acting downstream of the 26S proteasome in the ubiquitin-proteasome pathway. Has a role in regulation of fat storage. In Caenorhabditis elegans, this protein is Tripeptidyl-peptidase 2 (tpp-2).